Reading from the N-terminus, the 264-residue chain is MEFKHKKKYGQNFLNNKDEILNKIIEVSNIDDNDEILEIGPGQGALTSLLVERVKKITCVEIDKDLENTLRKKFSSKENYTLVMEDVLEVDLRRYINQGTKVVANIPYYITSPIINKIIENKDLIDEAYIMVQKEVGERICAKSGKERGILTLAVEYYGESEYLFTIPREFFNPIPNVDSAFISIKFYKDDRYKNKISEDLFFKYVKAAFSNKRKNIVNNLVTLGYSKDKIKEILNQIEISENERAENISIDKFIELIKIFEGR.

6 residues coordinate S-adenosyl-L-methionine: Asn12, Leu14, Gly40, Glu61, Asp86, and Asn105.

The protein belongs to the class I-like SAM-binding methyltransferase superfamily. rRNA adenine N(6)-methyltransferase family. RsmA subfamily.

It localises to the cytoplasm. It catalyses the reaction adenosine(1518)/adenosine(1519) in 16S rRNA + 4 S-adenosyl-L-methionine = N(6)-dimethyladenosine(1518)/N(6)-dimethyladenosine(1519) in 16S rRNA + 4 S-adenosyl-L-homocysteine + 4 H(+). Specifically dimethylates two adjacent adenosines (A1518 and A1519) in the loop of a conserved hairpin near the 3'-end of 16S rRNA in the 30S particle. May play a critical role in biogenesis of 30S subunits. In Fusobacterium nucleatum subsp. nucleatum (strain ATCC 25586 / DSM 15643 / BCRC 10681 / CIP 101130 / JCM 8532 / KCTC 2640 / LMG 13131 / VPI 4355), this protein is Ribosomal RNA small subunit methyltransferase A.